The chain runs to 68 residues: Glucagon-1 (68 aa).

This sequence belongs to the glucagon family.

It is found in the secreted. Promotes hydrolysis of glycogen and lipids, and raises the blood sugar level. This Oncorhynchus kisutch (Coho salmon) protein is Glucagon-1 (gcg).